We begin with the raw amino-acid sequence, 275 residues long: 6-deoxy-6-sulfo-D-fructose transketolase subunit SqwG (275 aa).

The protein belongs to the transketolase family. Forms a complex with SqwH. Thiamine diphosphate serves as cofactor.

The catalysed reaction is 6-deoxy-6-sulfo-D-fructose + D-glyceraldehyde 3-phosphate = 4-deoxy-4-sulfo-D-erythrose + D-xylulose 5-phosphate. It catalyses the reaction 4-deoxy-4-sulfo-D-erythrulose + D-glyceraldehyde 3-phosphate = sulfoacetaldehyde + D-xylulose 5-phosphate. Its function is as follows. Part of the sulfo-TK pathway, a D-sulfoquinovose degradation pathway that produces 2-hydroxyethane-1-sulfonate (isethionate). Catalyzes two steps of the pathway: the formation of 4-deoxy-4-sulfoerythrose (SE) and xylulose 5-phosphate from 6-deoxy-6-sulfo-D-fructose (SF) and glyceraldehyde 3-phosphate, and the formation of sulfoacetaldehyde (SA) and xylulose 5-phosphate from 4-deoxy-4-sulfo-D-erythrulose (SEu) and glyceraldehyde 3-phosphate. The sequence is that of 6-deoxy-6-sulfo-D-fructose transketolase subunit SqwG from Clostridium sp. (strain MSTE9).